The chain runs to 523 residues: Signal peptide peptidase-like 3 (523 aa).

The N-terminal stretch at 1-35 is a signal peptide; it reads MAFPAPSSSSPRRRGRGLAYLLVSVLLLASRVPGA. Residues 36–207 lie on the Lumenal side of the membrane; the sequence is AGADSEFEDG…EKPSFDGAIP (172 aa). The PA domain occupies 110–182; it reads SAPLASSIAV…SQSAGRKILS (73 aa). Asn-159 carries an N-linked (GlcNAc...) asparagine glycan. Residues 208 to 228 traverse the membrane as a helical segment; it reads FLWLMAVGSVACASVWSFVVV. Topologically, residues 229–254 are cytoplasmic; the sequence is GDEDKNAPTLGGEEAADSEIVELQTK. The helical transmembrane segment at 255–272 threads the bilayer; it reads TALVFIVTASLVLLFLFF. Topologically, residues 273–275 are lumenal; that stretch reads FKS. Residues 276-298 form a helical membrane-spanning segment; that stretch reads TWSAWLLVVLFCLSGLQGLHYVA. Residues 299-321 are Cytoplasmic-facing; the sequence is STLIVRTCDRCREAKVALPVLGN. The helical transmembrane segment at 322-342 threads the bilayer; it reads VTVVTLVILPLALIFVVVWAV. Residues 343-347 lie on the Lumenal side of the membrane; the sequence is HQNSP. The chain crosses the membrane as a helical span at residues 348–368; it reads FAWVGQDLMGICMMILVLQVV. Topologically, residues 369–377 are cytoplasmic; the sequence is HLPNIKVAT. Residues 378–398 traverse the membrane as a helical segment; it reads ALLVSAFMYDIFWVFISPFIF. The active site involves Asp-387. The Lumenal portion of the chain corresponds to 399-430; it reads KKSVMITVARGSDEGPSLPMVLKMPKEFDTWN. The helical transmembrane segment at 431–451 threads the bilayer; that stretch reads GYDMIGFGDILFPGLLVAFSF. Asp-439 is an active-site residue. Topologically, residues 452–465 are cytoplasmic; it reads RYDRANGKDLTDGY. Residues 466–486 form a helical membrane-spanning segment; it reads FLCLMIGYAFGLSCTYVGLYL. Residues 487-489 are Lumenal-facing; it reads MKS. Residues 490 to 510 form a helical membrane-spanning segment; the sequence is GQPALLYLVPSTLGTIVTLGA. The PAL signature appears at 492–494; sequence PAL. Topologically, residues 511–523 are cytoplasmic; sequence KRGELSQLWNAKV.

It belongs to the peptidase A22B family. Glycosylated.

It localises to the endosome membrane. Intramembrane-cleaving aspartic protease (I-CLiP) that cleaves type II membrane signal peptides in the hydrophobic plane of the membrane. In Oryza sativa subsp. japonica (Rice), this protein is Signal peptide peptidase-like 3 (SPPL3).